The primary structure comprises 645 residues: 1,4-alpha-glucan branching enzyme GlgB (645 aa).

Asp-309 (nucleophile) is an active-site residue. The active-site Proton donor is the Glu-352. A disordered region spans residues 619 to 645 (VKTRKGSKKQDGSKTKVRSNVTSRGKR). Residues 636–645 (RSNVTSRGKR) are compositionally biased toward polar residues.

It belongs to the glycosyl hydrolase 13 family. GlgB subfamily. As to quaternary structure, monomer.

It catalyses the reaction Transfers a segment of a (1-&gt;4)-alpha-D-glucan chain to a primary hydroxy group in a similar glucan chain.. Its pathway is glycan biosynthesis; glycogen biosynthesis. Its function is as follows. Catalyzes the formation of the alpha-1,6-glucosidic linkages in glycogen by scission of a 1,4-alpha-linked oligosaccharide from growing alpha-1,4-glucan chains and the subsequent attachment of the oligosaccharide to the alpha-1,6 position. This is 1,4-alpha-glucan branching enzyme GlgB from Bacillus cereus (strain AH187).